Reading from the N-terminus, the 246-residue chain is Probable chemoreceptor glutamine deamidase CheD (246 aa).

The disordered stretch occupies residues 225-246 (GAGVQPAVQKAASPYAANLSRK).

This sequence belongs to the CheD family.

It catalyses the reaction L-glutaminyl-[protein] + H2O = L-glutamyl-[protein] + NH4(+). Its function is as follows. Probably deamidates glutamine residues to glutamate on methyl-accepting chemotaxis receptors (MCPs), playing an important role in chemotaxis. This Burkholderia vietnamiensis (strain G4 / LMG 22486) (Burkholderia cepacia (strain R1808)) protein is Probable chemoreceptor glutamine deamidase CheD.